The sequence spans 228 residues: 5'-methylthioadenosine/S-adenosylhomocysteine nucleosidase (228 aa).

Glu11 serves as the catalytic Proton acceptor. Substrate-binding positions include Gly77, Ile151, and 172-173 (ME). Catalysis depends on Asp196, which acts as the Proton donor.

The protein belongs to the PNP/UDP phosphorylase family. MtnN subfamily.

The enzyme catalyses S-adenosyl-L-homocysteine + H2O = S-(5-deoxy-D-ribos-5-yl)-L-homocysteine + adenine. It catalyses the reaction S-methyl-5'-thioadenosine + H2O = 5-(methylsulfanyl)-D-ribose + adenine. It carries out the reaction 5'-deoxyadenosine + H2O = 5-deoxy-D-ribose + adenine. The protein operates within amino-acid biosynthesis; L-methionine biosynthesis via salvage pathway; S-methyl-5-thio-alpha-D-ribose 1-phosphate from S-methyl-5'-thioadenosine (hydrolase route): step 1/2. Functionally, catalyzes the irreversible cleavage of the glycosidic bond in both 5'-methylthioadenosine (MTA) and S-adenosylhomocysteine (SAH/AdoHcy) to adenine and the corresponding thioribose, 5'-methylthioribose and S-ribosylhomocysteine, respectively. Also cleaves 5'-deoxyadenosine, a toxic by-product of radical S-adenosylmethionine (SAM) enzymes, into 5-deoxyribose and adenine. This is 5'-methylthioadenosine/S-adenosylhomocysteine nucleosidase from Staphylococcus carnosus (strain TM300).